The following is a 460-amino-acid chain: Sorting nexin-4 (460 aa).

The span at 1 to 16 shows a compositional bias: polar residues; it reads MTATEQQQDDFSNVSW. The segment at 1 to 53 is disordered; sequence MTATEQQQDDFSNVSWSEHVHDQQTRSVPDAEEPGHDMNAPGTGLERDAPSLG. A PX domain is found at 56–178; that stretch reads KLECTVDTPI…TFLESPDWNA (123 aa). Coiled-coil stretches lie at residues 238 to 266, 306 to 337, and 374 to 403; these read EKVI…QKLI, RDMQ…EYLN, and QARR…TSDM.

This sequence belongs to the sorting nexin family. Forms a complex with ATG20 and ATG17.

The protein resides in the cytoplasm. Its subcellular location is the membrane. It localises to the endosome membrane. In terms of biological role, sorting nexin involved in the separation or division of vacuoles throughout the entire life cycle of the cells. Involved in retrieval of late-Golgi SNAREs from post-Golgi endosomes to the trans-Golgi network, for cytoplasm to vacuole transport (Cvt), and autophagy of large cargos including mitophagy, pexophagy and glycophagy. Autophagy is required for proper vegetative growth, asexual/sexual reproduction, and full virulence. Autophagy is particularly involved in the biosynthesis of deoxynivalenol (DON), an important virulence determinant. The chain is Sorting nexin-4 from Gibberella zeae (strain ATCC MYA-4620 / CBS 123657 / FGSC 9075 / NRRL 31084 / PH-1) (Wheat head blight fungus).